We begin with the raw amino-acid sequence, 262 residues long: Type II restriction enzyme HinfI (262 aa).

The enzyme catalyses Endonucleolytic cleavage of DNA to give specific double-stranded fragments with terminal 5'-phosphates.. A P subtype restriction enzyme that recognizes the double-stranded sequence 5'-GANTC-3' and cleaves after G-1. This Haemophilus influenzae protein is Type II restriction enzyme HinfI (hinfIR).